Consider the following 295-residue polypeptide: Aquaporin-9 (295 aa).

Topologically, residues 1–24 are cytoplasmic; the sequence is MPSEKDRAKKNLVQRLALKSCLAK. A helical transmembrane segment spans residues 25–43; it reads ETLSEFLGTFIMIVLGCGS. The Extracellular portion of the chain corresponds to 44-57; that stretch reads IAQAVLSREKAGGI. A helical transmembrane segment spans residues 58–77; that stretch reads ITINIGFATAVVMALYATFG. Topologically, residues 78–79 are cytoplasmic; the sequence is VS. An intramembrane region (discontinuously helical) is located at residues 80-92; that stretch reads GGHINPAVSFAMC. An NPA 1 motif is present at residues 84-86; it reads NPA. The Cytoplasmic segment spans residues 93–98; that stretch reads TFGRME. The chain crosses the membrane as a helical span at residues 99 to 123; the sequence is WFKFPFYVGAQLLGAFVGAATVFGI. Topologically, residues 124 to 160 are extracellular; the sequence is YYDGLMAFADGKLLITGENGTAFIFATYPKPFVSVPG. Residues 161 to 178 traverse the membrane as a helical segment; sequence AFVDQVVSTMFLLLIVFA. At 179-190 the chain is on the cytoplasmic side; it reads IFDSRNLGVPRG. The helical transmembrane segment at 191 to 207 threads the bilayer; sequence LEPIVIGLLIIVISCSL. Residues 208 to 210 are Extracellular-facing; it reads GLN. An intramembrane region (discontinuously helical) is located at residues 211-225; the sequence is SGCAMNPARDLSPRL. Positions 216 to 218 match the NPA 2 motif; sequence NPA. The Extracellular portion of the chain corresponds to 226-243; the sequence is FTALAGWGFEVFTFGNNF. The helical transmembrane segment at 244 to 264 threads the bilayer; the sequence is WWIPVVGPMIGAVLGGLIYVL. Over 265–295 the chain is Cytoplasmic; sequence FIQMHHSNPDPEVKAEPAENNLEKHELSVIM.

Belongs to the MIP/aquaporin (TC 1.A.8) family. Homotetramer; each monomer provides an independent glycerol/water pore.

It is found in the cell membrane. The protein localises to the basolateral cell membrane. The enzyme catalyses glycerol(in) = glycerol(out). The catalysed reaction is H2O(in) = H2O(out). It catalyses the reaction urea(in) = urea(out). It carries out the reaction (S)-lactate(in) = (S)-lactate(out). The enzyme catalyses NH4(+)(in) = NH4(+)(out). The catalysed reaction is uracil(in) = uracil(out). It catalyses the reaction adenine(out) = adenine(in). It carries out the reaction 3-hydroxybutanoate(in) = 3-hydroxybutanoate(out). The enzyme catalyses D-sorbitol(in) = D-sorbitol(out). The catalysed reaction is D-mannitol(in) = D-mannitol(out). It catalyses the reaction H2O2(out) = H2O2(in). It carries out the reaction arsenite(in) = arsenite(out). The enzyme catalyses selenite(in) = selenite(out). Its function is as follows. Aquaglyceroporins form homotetrameric transmembrane channels, with each monomer independently mediating glycerol and water transport across the plasma membrane along their osmotic gradient. AQP9 is the primary route for glycerol uptake in hepatocytes, supporting hepatic gluconeogenesis. It exhibits broad specificity and may transport various small, non-charged solutes, including carbamides, polyols, purines, and pyrimidines. AQP9 may also facilitate hepatic urea extrusion. Due to its permeability to lactate, AQP9 might participate in the astrocyte-to-neuron lactate shuttle, supplying neurons with energy. Additionally, AQP9 is permeable to arsenite, contributing to arsenic excretion by the liver and providing partial protection against arsenic toxicity. It is also permeable to H2O2 in vivo. Could also be permeable to ammonium. The polypeptide is Aquaporin-9 (Mus musculus (Mouse)).